Reading from the N-terminus, the 573-residue chain is SHC-transforming protein 2 (573 aa).

The 185-residue stretch at 125–309 (LGPGVSYIVR…LEELAWGDDD (185 aa)) folds into the PID domain. A CH1 region spans residues 310 to 477 (AAADHNYYNS…PTEEQLRQEP (168 aa)). 3 positions are modified to phosphotyrosine: tyrosine 316, tyrosine 317, and tyrosine 395. Residues 478–569 (WYHGRMSRRA…ESELHLRGVV (92 aa)) form the SH2 domain.

As to quaternary structure, interacts with the Trk receptors in a phosphotyrosine-dependent manner and MEGF12. Once activated, binds to GRB2. Phosphorylated on tyrosine by the Trk receptors. As to expression, expressed in brain. Expressed at high level in the hypothalamus and at low level in the caudate nucleus.

In terms of biological role, signaling adapter that couples activated growth factor receptors to signaling pathway in neurons. Involved in the signal transduction pathways of neurotrophin-activated Trk receptors in cortical neurons. In Mus musculus (Mouse), this protein is SHC-transforming protein 2 (Shc2).